Reading from the N-terminus, the 979-residue chain is Putative disease resistance protein RGA1 (979 aa).

An NB-ARC domain is found at 143 to 437; it reads GSVLTEPQVY…MAHGFLLSKG (295 aa). 182–189 contributes to the ATP binding site; sequence GMGGLGKT. 12 LRR repeats span residues 524-547, 549-570, 571-594, 595-619, 637-661, 748-773, 823-841, 842-866, 868-890, 891-915, 917-939, and 940-965; these read FVSLRVLNLRNSNLNQLPSSIGDL, HLRYLDLSGNFRIRNLPKRLCK, LQNLQTLDLHYCDSLSCLPKQTSK, LGSLRNLLLDGCSLTSTPPRIGLLT, LGELKNLNLYGSISITKLDRVKKDT, LPCLESLELHTGSADVEYVEDNVHPG, VKTLKVIVTDATVLRSISN, LRALTSLDISDNVEATSLPEEMFKS, ANLKYLKISFFRNLKELPTSLAS, LNALKSLKFEFCDALESLPEEGVKG, TSLTELSVSNCMMLKCLPEGLQH, and LTALTTLTITQCPIVFKRCERGIGED.

This sequence belongs to the disease resistance NB-LRR family.

Its function is as follows. Disease resistance protein. Resistance proteins guard the plant against pathogens that contain an appropriate avirulence protein via a direct or indirect interaction with this avirulence protein. That triggers a defense system which restricts the pathogen growth. The protein is Putative disease resistance protein RGA1 (RGA1) of Solanum bulbocastanum (Wild potato).